The following is a 175-amino-acid chain: RNA pyrophosphohydrolase (175 aa).

The Nudix hydrolase domain maps to 7–150 (GYRLNVGIIL…KRQVYIQALK (144 aa)). The Nudix box motif lies at 39-60 (GGLAPGETAMQAMYRELHEEVG).

This sequence belongs to the Nudix hydrolase family. RppH subfamily. It depends on a divalent metal cation as a cofactor.

Functionally, accelerates the degradation of transcripts by removing pyrophosphate from the 5'-end of triphosphorylated RNA, leading to a more labile monophosphorylated state that can stimulate subsequent ribonuclease cleavage. The sequence is that of RNA pyrophosphohydrolase from Legionella pneumophila (strain Paris).